The primary structure comprises 273 residues: Putative phosphoenolpyruvate synthase regulatory protein (273 aa).

153-160 (GVSRSGKT) serves as a coordination point for ADP.

This sequence belongs to the pyruvate, phosphate/water dikinase regulatory protein family. PSRP subfamily.

It catalyses the reaction [pyruvate, water dikinase] + ADP = [pyruvate, water dikinase]-phosphate + AMP + H(+). The enzyme catalyses [pyruvate, water dikinase]-phosphate + phosphate + H(+) = [pyruvate, water dikinase] + diphosphate. Bifunctional serine/threonine kinase and phosphorylase involved in the regulation of the phosphoenolpyruvate synthase (PEPS) by catalyzing its phosphorylation/dephosphorylation. In Delftia acidovorans (strain DSM 14801 / SPH-1), this protein is Putative phosphoenolpyruvate synthase regulatory protein.